The chain runs to 145 residues: 3-hydroxyacyl-[acyl-carrier-protein] dehydratase FabZ (145 aa).

Residue His48 is part of the active site.

Belongs to the thioester dehydratase family. FabZ subfamily.

The protein resides in the cytoplasm. The catalysed reaction is a (3R)-hydroxyacyl-[ACP] = a (2E)-enoyl-[ACP] + H2O. Functionally, involved in unsaturated fatty acids biosynthesis. Catalyzes the dehydration of short chain beta-hydroxyacyl-ACPs and long chain saturated and unsaturated beta-hydroxyacyl-ACPs. This Marinobacter nauticus (strain ATCC 700491 / DSM 11845 / VT8) (Marinobacter aquaeolei) protein is 3-hydroxyacyl-[acyl-carrier-protein] dehydratase FabZ.